We begin with the raw amino-acid sequence, 162 residues long: MGLETEKADAQIYMDEDSYSRHSGLGYPEPEKCAKSTQDRDPRGLNTHLKMGFEDVIGEPESTHSFDKVWICSHALFEVSKYLIYKVLTVLLAIPLAFVAGILFATLSCLHIWIVVPFVKTCLMVLPSVQTVWHSITDGFIAPLYKSMGLIFSSISLRLSPE.

Topologically, residues Met-1–Lys-86 are cytoplasmic. Position 19 is a phosphotyrosine; by SRC (Tyr-19). The tract at residues Tyr-19 to Arg-40 is disordered. Phosphoserine is present on residues Ser-20 and Ser-23. Tyr-27 is modified (phosphotyrosine; by SRC). Over residues Glu-29–Arg-40 the composition is skewed to basic and acidic residues. At Ser-36 the chain carries Phosphoserine. The helical intramembrane region spans Val-87–Leu-107. At Ser-108–Glu-162 the chain is on the cytoplasmic side.

It belongs to the caveolin family. As to quaternary structure, monomer or homodimer. Interacts with CAV1; the interaction forms a stable heterooligomeric complex that is required for targeting to lipid rafts and for caveolae formation. Tyrosine phosphorylated forms do not form heterooligomers with the Tyr-19-phosphorylated form existing as a monomer or dimer, and the Tyr-27-form as a monomer only. Interacts (tyrosine phosphorylated form) with the SH2 domain-containing proteins, RASA1, NCK1 and SRC. Interacts (tyrosine phosphorylated form) with INSR, the interaction (Tyr-27-phosphorylated form) is increased on insulin stimulation. Interacts (Tyr-19 phosphorylated form) with MAPK1 (phosphorylated form); the interaction, promoted by insulin, leads to nuclear location and MAPK1 activation. Interacts with STAT3; the interaction is increased on insulin-induced tyrosine phosphorylation leading to STAT activation. Post-translationally, phosphorylated on serine and tyrosine residues. CAV1 promotes phosphorylation on Ser-23 which then targets the complex to the plasma membrane, lipid rafts and caveolae. Phosphorylation on Ser-36 appears to modulate mitosis in endothelial cells. Phosphorylation on both Tyr-19 and Tyr-27 is required for insulin-induced 'Ser-727' phosphorylation of STAT3 and its activation. Phosphorylation on Tyr-19 is required for insulin-induced phosphorylation of MAPK1 and DNA binding of STAT3. Tyrosine phosphorylation is induced by both EGF and insulin (By. similarity).

It localises to the nucleus. The protein localises to the cytoplasm. Its subcellular location is the golgi apparatus membrane. It is found in the cell membrane. The protein resides in the membrane. It localises to the caveola. May act as a scaffolding protein within caveolar membranes. Interacts directly with G-protein alpha subunits and can functionally regulate their activity. Acts as an accessory protein in conjunction with CAV1 in targeting to lipid rafts and driving caveolae formation. The Ser-36 phosphorylated form has a role in modulating mitosis in endothelial cells. Positive regulator of cellular mitogenesis of the MAPK signaling pathway. Required for the insulin-stimulated nuclear translocation and activation of MAPK1 and STAT3, and the subsequent regulation of cell cycle progression. The polypeptide is Caveolin-2 (CAV2) (Didelphis virginiana (North American opossum)).